The chain runs to 873 residues: Envelope glycoprotein B (873 aa).

Positions 1 to 21 are cleaved as a signal peptide; it reads MASLKMLICVCVAILIPSTLS. Over 22–740 the chain is Virion surface; it reads QDSHGIAGII…SGIASFLSNP (719 aa). Intrachain disulfides connect Cys67–Cys525, Cys84–Cys481, Cys157–Cys219, Cys311–Cys359, and Cys548–Cys598. N-linked (GlcNAc...) asparagine; by host glycosylation is found at Asn92 and Asn111. Positions 124 to 130 are involved in fusion and/or binding to host membrane; that stretch reads TWALFSR. N-linked (GlcNAc...) asparagine; by host glycosylation occurs at Asn201. The tract at residues 206–213 is involved in fusion and/or binding to host membrane; the sequence is HQTLGYRT. Residues Asn252 and Asn350 are each glycosylated (N-linked (GlcNAc...) asparagine; by host). Residues 418-447 are disordered; sequence QNHLPRGRERRQAAGRRTASLQSGPQGDRI. Asn569, Asn625, and Asn639 each carry an N-linked (GlcNAc...) asparagine; by host glycan. Hydrophobic membrane proximal region stretches follow at residues 684 to 738 and 715 to 734; these read IDTV…SFLS and LGTV…SGIA. Residues 741–761 traverse the membrane as a helical segment; sequence FAALGIGIAVVVSIILGLLAF. Residues 762–873 lie on the Intravirion side of the membrane; the sequence is KYVMNLKSNP…PSWAEESEDE (112 aa). The segment at 781–807 is disordered; the sequence is PPAGTPPRPSRRYYKDEEEVEEDSDED. The segment covering 796-807 has biased composition (acidic residues); that stretch reads DEEEVEEDSDED. The Internalization motif motif lies at 858-861; that stretch reads YPLL.

This sequence belongs to the herpesviridae glycoprotein B family. As to quaternary structure, homotrimer; disulfide-linked. Binds to heparan sulfate proteoglycans. Interacts with gH/gL heterodimer. A proteolytic cleavage by host furin generates two subunits that remain linked by disulfide bonds.

It is found in the virion membrane. It localises to the host cell membrane. The protein resides in the host endosome membrane. The protein localises to the host Golgi apparatus membrane. Its function is as follows. Envelope glycoprotein that forms spikes at the surface of virion envelope. Essential for the initial attachment to heparan sulfate moieties of the host cell surface proteoglycans. Involved in fusion of viral and cellular membranes leading to virus entry into the host cell. Following initial binding to its host receptors, membrane fusion is mediated by the fusion machinery composed at least of gB and the heterodimer gH/gL. May be involved in the fusion between the virion envelope and the outer nuclear membrane during virion egress. This Infectious laryngotracheitis virus (strain 632) (ILTV) protein is Envelope glycoprotein B.